A 226-amino-acid chain; its full sequence is Cell division protein SepF (226 aa).

A disordered region spans residues 20–116 (RAYDDAGYDK…ESLTYHTRDN (97 aa)). Over residues 22–44 (YDDAGYDKGGYRESRYRSSRYSE) the composition is skewed to basic and acidic residues. The segment covering 45–56 (DFGDEDDEDEEA) has biased composition (acidic residues). Positions 62-95 (RRGDRSRLERAAARSGDVDHNVEGEQPERVERAS) are enriched in basic and acidic residues. The segment covering 97–111 (RSITRSAEPSESLTY) has biased composition (polar residues).

The protein belongs to the SepF family. In terms of assembly, homodimer. Interacts with FtsZ.

It localises to the cytoplasm. Cell division protein that is part of the divisome complex and is recruited early to the Z-ring. Probably stimulates Z-ring formation, perhaps through the cross-linking of FtsZ protofilaments. Its function overlaps with FtsA. The protein is Cell division protein SepF of Salinispora arenicola (strain CNS-205).